The sequence spans 241 residues: MSEEIANQNPDALVISKDPLHPANLIPELCASFYHLGWVTGTGGGISIRQGNIVYIAPSGVQKERIKPTDIFVLPYPQPPCDPHADRIFLRRPSNNLKESACTPLFWNSFELRDAGSCIHTHSQHAVMATLLWPGEVFKVSHLMIKGVRIGGTGKALSYLDTLVVPIIENTPFEEDLKDSMAEAMKKYPDAAGVLVRRHGVYVWGTDWEKAKTQTECLDYLFEVAVKMKLAGVPTLLNEDK.

Position 102 (Cys-102) interacts with substrate. 3 residues coordinate Zn(2+): His-120, His-122, and His-199.

This sequence belongs to the aldolase class II family. MtnB subfamily. Zn(2+) serves as cofactor.

It localises to the cytoplasm. It catalyses the reaction 5-(methylsulfanyl)-D-ribulose 1-phosphate = 5-methylsulfanyl-2,3-dioxopentyl phosphate + H2O. The protein operates within amino-acid biosynthesis; L-methionine biosynthesis via salvage pathway; L-methionine from S-methyl-5-thio-alpha-D-ribose 1-phosphate: step 2/6. Its function is as follows. Catalyzes the dehydration of methylthioribulose-1-phosphate (MTRu-1-P) into 2,3-diketo-5-methylthiopentyl-1-phosphate (DK-MTP-1-P). This is Methylthioribulose-1-phosphate dehydratase from Coprinopsis cinerea (strain Okayama-7 / 130 / ATCC MYA-4618 / FGSC 9003) (Inky cap fungus).